A 488-amino-acid polypeptide reads, in one-letter code: Protein nucleotidyltransferase YdiU (488 aa).

The ATP site is built by Gly91, Gly93, Arg94, Lys114, Asp126, Gly127, Arg177, and Arg184. The disordered stretch occupies residues 108–127; the sequence is RFDIQLKGSGPTPYSRRGDG. Asp253 serves as the catalytic Proton acceptor. Mg(2+) contacts are provided by Asn254 and Asp263. Asp263 contributes to the ATP binding site.

It belongs to the SELO family. The cofactor is Mg(2+). Mn(2+) is required as a cofactor.

It carries out the reaction L-seryl-[protein] + ATP = 3-O-(5'-adenylyl)-L-seryl-[protein] + diphosphate. It catalyses the reaction L-threonyl-[protein] + ATP = 3-O-(5'-adenylyl)-L-threonyl-[protein] + diphosphate. The catalysed reaction is L-tyrosyl-[protein] + ATP = O-(5'-adenylyl)-L-tyrosyl-[protein] + diphosphate. The enzyme catalyses L-histidyl-[protein] + UTP = N(tele)-(5'-uridylyl)-L-histidyl-[protein] + diphosphate. It carries out the reaction L-seryl-[protein] + UTP = O-(5'-uridylyl)-L-seryl-[protein] + diphosphate. It catalyses the reaction L-tyrosyl-[protein] + UTP = O-(5'-uridylyl)-L-tyrosyl-[protein] + diphosphate. Functionally, nucleotidyltransferase involved in the post-translational modification of proteins. It can catalyze the addition of adenosine monophosphate (AMP) or uridine monophosphate (UMP) to a protein, resulting in modifications known as AMPylation and UMPylation. This chain is Protein nucleotidyltransferase YdiU, found in Bacillus cereus (strain AH820).